A 401-amino-acid polypeptide reads, in one-letter code: Elongation factor Tu 2 (401 aa).

Residues 10–209 enclose the tr-type G domain; the sequence is KPHVNVGTIG…AVDEYIPTPV (200 aa). Positions 19-26 are G1; that stretch reads GHVDHGKT. 19 to 26 contributes to the GTP binding site; that stretch reads GHVDHGKT. T26 is a binding site for Mg(2+). Positions 60-64 are G2; sequence GITIA. The interval 81–84 is G3; it reads DCPG. Residues 81-85 and 136-139 contribute to the GTP site; these read DCPGH and NKVD. Residues 136 to 139 are G4; that stretch reads NKVD. Positions 174-176 are G5; that stretch reads SAL.

It belongs to the TRAFAC class translation factor GTPase superfamily. Classic translation factor GTPase family. EF-Tu/EF-1A subfamily. In terms of assembly, monomer.

The protein resides in the cytoplasm. The catalysed reaction is GTP + H2O = GDP + phosphate + H(+). Its function is as follows. GTP hydrolase that promotes the GTP-dependent binding of aminoacyl-tRNA to the A-site of ribosomes during protein biosynthesis. The chain is Elongation factor Tu 2 from Roseiflexus castenholzii (strain DSM 13941 / HLO8).